The chain runs to 215 residues: Protein Ac34 (215 aa).

In terms of assembly, interacts with host proteins P40, P34 ands P20.

The protein resides in the host nucleus. Plays a role in the translocation of the P40 subunit of host Arp2/3 to the nucleus. The robust nuclear accumulation of Arp2/3 induces nuclear actin polymerization to assist in virus replication. Mechanistically, subverts the host CRM1-dependent nuclear export pathway leading to Arp2/3 acumulation in the host nucleus. The protein is Protein Ac34 (Ac34) of Autographa californica nuclear polyhedrosis virus (AcMNPV).